Here is a 296-residue protein sequence, read N- to C-terminus: MIVPLQGAQMLQMLEKSLKKYLPESLKVYGTIYHVNHGNPFNLKALVDKWPDFNTVVVRPQEQEMKDDLDFYTNTYQIYSKDPENCQEFLGSSEVINWKQHLQIQSSQSHLNKAIQNLASIHSLQVKHSENILYVVSETVRKLFPSLLDTKNLSPGSGKPKAINQEMFKLSSLDVTHAALVNKFWLFGGNERSQRFIERCIKNFPSSCVLGPEGTPASWTLMDQTGEMRMGGTVPQYRAQGLVSFVIYSQDQIMKKRGFPVYSHTDKSNTVMQKMSYSLQHLPMPCAWNQWICVPM.

Lys-16 is modified (N6-acetyllysine; alternate). Lys-16 carries the post-translational modification N6-succinyllysine; alternate. An N6-acetyllysine modification is found at Lys-113. Lys-127 and Lys-142 each carry N6-acetyllysine; alternate. N6-succinyllysine; alternate is present on residues Lys-127 and Lys-142. Lys-159 is subject to N6-acetyllysine. Lys-169 carries the post-translational modification N6-succinyllysine. Residues Lys-183 and Lys-256 each carry the N6-acetyllysine; alternate modification. N6-succinyllysine; alternate occurs at positions 183 and 256. Position 267 is an N6-succinyllysine (Lys-267).

It belongs to the glycine N-acyltransferase family.

Its subcellular location is the mitochondrion. It carries out the reaction an acyl-CoA + glycine = an N-acylglycine + CoA + H(+). It catalyses the reaction benzoyl-CoA + glycine = N-benzoylglycine + CoA + H(+). In terms of biological role, mitochondrial acyltransferase which transfers an acyl group to the N-terminus of glycine and glutamine, although much less efficiently. Can conjugate a multitude of substrates to form a variety of N-acylglycines, thereby detoxify xenobiotics, such as benzoic acid or salicylic acid, and endogenous organic acids, such as isovaleric acid. The chain is Glycine N-acyltransferase (Glyat) from Rattus norvegicus (Rat).